We begin with the raw amino-acid sequence, 85 residues long: Large ribosomal subunit protein bL31B (85 aa).

This sequence belongs to the bacterial ribosomal protein bL31 family. Type B subfamily. Part of the 50S ribosomal subunit.

The chain is Large ribosomal subunit protein bL31B from Porphyromonas gingivalis (strain ATCC 33277 / DSM 20709 / CIP 103683 / JCM 12257 / NCTC 11834 / 2561).